A 162-amino-acid polypeptide reads, in one-letter code: Interleukin-15 (162 aa).

A signal peptide spans 1 to 29; it reads MRISKPHLRSVSIQCYLCLLLNSHFLTEA. Positions 30–48 are excised as a propeptide; the sequence is GIHVFILGCFSAGLPKTEA. 2 cysteine pairs are disulfide-bonded: C83–C133 and C90–C136. N-linked (GlcNAc...) asparagine glycosylation occurs at N127.

The protein belongs to the IL-15/IL-21 family.

Its subcellular location is the secreted. In terms of biological role, cytokine that plays a major role in the development of inflammatory and protective immune responses to microbial invaders and parasites by modulating immune cells of both the innate and adaptive immune systems. Stimulates the proliferation of natural killer cells, T-cells and B-cells and promotes the secretion of several cytokines. In monocytes, induces the production of IL8 and monocyte chemotactic protein 1/CCL2, two chemokines that attract neutrophils and monocytes respectively to sites of infection. Unlike most cytokines, which are secreted in soluble form, IL15 is expressed in association with its high affinity IL15RA on the surface of IL15-producing cells and delivers signals to target cells that express IL2RB and IL2RG receptor subunits. Binding to its receptor triggers the phosphorylation of JAK1 and JAK3 and the recruitment and subsequent phosphorylation of signal transducer and activator of transcription-3/STAT3 and STAT5. In mast cells, induces the rapid tyrosine phosphorylation of STAT6 and thereby controls mast cell survival and release of cytokines such as IL4. This chain is Interleukin-15 (IL15), found in Macaca mulatta (Rhesus macaque).